The primary structure comprises 220 residues: Urease accessory protein UreE (220 aa).

The disordered stretch occupies residues 145 to 220 (EGGAYSAGGH…QIHKRRPDNL (76 aa)). Over residues 156–177 (HGHDHGSHEHSAHDHGKHDHAP) the composition is skewed to basic and acidic residues. Residues 178 to 188 (AKPATAATPAA) show a composition bias toward low complexity. A compositionally biased stretch (basic and acidic residues) spans 191–206 (HGPDCNHGHDHAHEAK).

Belongs to the UreE family.

It localises to the cytoplasm. Its function is as follows. Involved in urease metallocenter assembly. Binds nickel. Probably functions as a nickel donor during metallocenter assembly. This is Urease accessory protein UreE from Polaromonas sp. (strain JS666 / ATCC BAA-500).